The chain runs to 393 residues: Staphopain B (393 aa).

The first 36 residues, 1 to 36, serve as a signal peptide directing secretion; the sequence is MNSSYKSRVFNIISIIMVSMLILSLGAFANNNKAKA. The propeptide occupies 37–219; sequence DSHSKQLEIN…KVEENEAIQE (183 aa). Catalysis depends on residues cysteine 243, histidine 340, and asparagine 360.

This sequence belongs to the peptidase C47 family. In the cytoplasm, prematurely activated/folded SspB forms a stable non-covalent complex with SspC. In terms of processing, proteolytically cleaved by staphylococcal serine protease (SspA).

It is found in the secreted. Its activity is regulated as follows. Prematurely activated/folded staphopain B is inhibited by staphostatin B (SspC), which is probably required to protect staphylococcal cytoplasmic proteins from degradation by SspB. Cysteine protease that plays an important role in the inhibition of host innate immune response. Degrades host elastin, fibrogen, fibronectin and kininogen. Blocks phagocytosis of opsonised S.aureus by neutrophils and monocytes by inducing their death in a proteolytic activity-dependent manner. Decreases surface expression of the 'don't eat me' signal CD31 on neutrophils. Cleaves host galectin-3/LGALS3, thereby inhibiting the neutrophil-activating ability of the lectin. This Staphylococcus aureus (strain Mu50 / ATCC 700699) protein is Staphopain B (sspB).